Here is a 434-residue protein sequence, read N- to C-terminus: Enolase (434 aa).

Gln-163 is a binding site for (2R)-2-phosphoglycerate. Glu-205 acts as the Proton donor in catalysis. Mg(2+) is bound by residues Asp-242, Glu-291, and Asp-318. Positions 343, 372, 373, and 394 each coordinate (2R)-2-phosphoglycerate. The active-site Proton acceptor is Lys-343.

Belongs to the enolase family. It depends on Mg(2+) as a cofactor.

Its subcellular location is the cytoplasm. The protein resides in the secreted. It localises to the cell surface. The protein localises to the cell wall. The enzyme catalyses (2R)-2-phosphoglycerate = phosphoenolpyruvate + H2O. Its pathway is carbohydrate degradation; glycolysis; pyruvate from D-glyceraldehyde 3-phosphate: step 4/5. In terms of biological role, catalyzes the reversible conversion of 2-phosphoglycerate (2-PG) into phosphoenolpyruvate (PEP). It is essential for the degradation of carbohydrates via glycolysis. The protein is Enolase of Streptococcus pneumoniae serotype 2 (strain D39 / NCTC 7466).